The primary structure comprises 475 residues: Ankyrin repeat, SAM and basic leucine zipper domain-containing protein 1 (475 aa).

The tract at residues 1-24 (MAAAVQRGLPVAGGGESSESEDDG) is disordered. A phosphoserine mark is found at Ser17, Ser18, and Ser20. ANK repeat units lie at residues 45–74 (EKNE…SVES), 78–107 (YGWT…NASF), 110–144 (DKHT…DPNV), 148–177 (RLMT…EVNA), 181–210 (NGYT…NKML), and 214–243 (DGKT…PLEG). The SAM domain maps to 272–334 (SYAAFGDLEI…KILAALKELA (63 aa)).

As to quaternary structure, interacts with DDX4, PIWIL1, RANBP9 and TDRD1.

It localises to the cytoplasm. Functionally, plays a central role during spermatogenesis by repressing transposable elements and preventing their mobilization, which is essential for the germline integrity. Acts via the piRNA metabolic process, which mediates the repression of transposable elements during meiosis by forming complexes composed of piRNAs and Piwi proteins and governs the methylation and subsequent repression of transposons. Its association with pi-bodies suggests a participation in the primary piRNAs metabolic process. Required prior to the pachytene stage to facilitate the production of multiple types of piRNAs, including those associated with repeats involved in the regulation of retrotransposons. May act by mediating protein-protein interactions during germ cell maturation. This is Ankyrin repeat, SAM and basic leucine zipper domain-containing protein 1 (ASZ1) from Loxodonta africana (African elephant).